The following is a 204-amino-acid chain: Probable 5-formyltetrahydrofolate cyclo-ligase (204 aa).

5-9 contacts ATP; that stretch reads KNQLR. Substrate is bound by residues glutamate 57, tryptophan 102, and 140–144; that span reads HGKGY. ATP is bound by residues 139 to 146 and aspartate 188; that span reads GHGKGYYD.

Belongs to the 5-formyltetrahydrofolate cyclo-ligase family.

It catalyses the reaction (6S)-5-formyl-5,6,7,8-tetrahydrofolate + ATP = (6R)-5,10-methenyltetrahydrofolate + ADP + phosphate. The chain is Probable 5-formyltetrahydrofolate cyclo-ligase from Schizosaccharomyces pombe (strain 972 / ATCC 24843) (Fission yeast).